Consider the following 236-residue polypeptide: Small ribosomal subunit protein uS2c (236 aa).

This sequence belongs to the universal ribosomal protein uS2 family.

The protein resides in the plastid. Its subcellular location is the chloroplast. This Aethionema grandiflorum (Persian stone-cress) protein is Small ribosomal subunit protein uS2c (rps2).